The sequence spans 223 residues: Putative NAD(P)H nitroreductase SAUSA300_2462 (223 aa).

This sequence belongs to the nitroreductase family. FMN is required as a cofactor.

The protein is Putative NAD(P)H nitroreductase SAUSA300_2462 of Staphylococcus aureus (strain USA300).